The chain runs to 614 residues: MSRFARLLLMVVALFFTNAWAKTVKETLRITWKEGAPNGQARELIYTNGQFPSPTLVWDEDDDVEITVYNEMAKNVTVHWHGLDQKDTPWSDGTPGLSQRPIQPGNKFVYKFKASPPGNHWYHSHEKMSLVDGLYGAIHIRPKGDRTGLWSQISQDKDDIKAMENAAHDPEYLVVSDWSQYTSEEYWKISTDSGLLVFCLDSILVNGKGEVYCPGQKFLQAELAPGLVEDAFPPGTEVSDKGCFPADLDQVQGGPWNITKRPDLIPPRVQEGCVASSHENATIVVDPSRNNGWVSMHIVAAATIAQITFSVDSHEFWLYEIDGNYVNPRKFVSAVMSAGETFSVMIKLDQKPGRYTMRIPNSGASQVLGGFAEMVYKGCESEEKTGKAYLSYGGNPTSPDVEKNSFFPWQLDTDHMSPWPPNKPRPGNADEEHLLVLGRVGAPYNYTMNTKYLYPVDFQNDDPLLFYPNATRDTENDGLVLRTKNGSWVDLILQVSTLPGDTSSFEHFMHKHGSKTWRIGFGTGVWNYTSVEEAIKERPKDFNLETPGLRDTWITAFSIGGEAYWSVFRYFVDNPGPWLFHCHIELHLMGGMGIAILDGVDAWPEHIPEEYQLC.

Residues 1 to 21 form the signal peptide; it reads MSRFARLLLMVVALFFTNAWA. Plastocyanin-like domains are found at residues 30 to 143 and 172 to 360; these read ITWK…IRPK and YLVV…MRIP. N75 is a glycosylation site (N-linked (GlcNAc...) asparagine). Residues H79, H81, H123, and H125 each coordinate Cu cation. N257, N280, N445, N469, and N485 each carry an N-linked (GlcNAc...) asparagine glycan. The region spanning 469–599 is the Plastocyanin-like 3 domain; sequence NATRDTENDG…GGMGIAILDG (131 aa). Positions 507, 510, and 512 each coordinate Cu cation. A glycan (N-linked (GlcNAc...) asparagine) is linked at N527. Cu cation is bound by residues H581, C582, H583, and H587.

This sequence belongs to the multicopper oxidase family. Cu cation is required as a cofactor.

It is found in the cell surface. Its pathway is pigment biosynthesis. Its function is as follows. Laccase; part of the Pks1 gene cluster that mediates the biosynthesis of an anthraquinone derivative pigment that contributes to conidial pigmentation that provides protection from UV radiation, heat and cold stress. The polyketide synthase Pks1 produces 1-acetyl-2,4,6,8-tetrahydroxy-9,10-anthraquinone though condensation of acetyl-CoA with malonyl-CoA. The dehydratase EthD and the laccase Mlac1 further convert the anthraquinone derivative into the final conidial pigment. The chain is Laccase 1 from Metarhizium majus (strain ARSEF 297).